Here is a 268-residue protein sequence, read N- to C-terminus: Hydroxyethylthiazole kinase (268 aa).

M45 contributes to the substrate binding site. ATP-binding residues include R121 and T167. G194 contributes to the substrate binding site.

This sequence belongs to the Thz kinase family. Mg(2+) is required as a cofactor.

It catalyses the reaction 5-(2-hydroxyethyl)-4-methylthiazole + ATP = 4-methyl-5-(2-phosphooxyethyl)-thiazole + ADP + H(+). The protein operates within cofactor biosynthesis; thiamine diphosphate biosynthesis; 4-methyl-5-(2-phosphoethyl)-thiazole from 5-(2-hydroxyethyl)-4-methylthiazole: step 1/1. Catalyzes the phosphorylation of the hydroxyl group of 4-methyl-5-beta-hydroxyethylthiazole (THZ). This chain is Hydroxyethylthiazole kinase, found in Bacillus cereus (strain Q1).